The following is a 545-amino-acid chain: 4-coumarate--CoA ligase 2 (545 aa).

Ser192, Ser193, Gly194, Thr195, Thr196, and Lys200 together coordinate ATP. Tyr242 and Ser246 together coordinate (E)-4-coumaroyl-AMP. Lys263 is a binding site for CoA. The tract at residues 265-334 (DIAQFLELIP…AKFPNAKLGQ (70 aa)) is SBD1. Positions 312, 334, 335, 339, and 347 each coordinate (E)-4-coumaroyl-AMP. 3 residues coordinate ATP: Gln334, Gly335, and Thr339. Residues 335 to 402 (GYGMTEAGPV…IRGDQIMKGY (68 aa)) form an SBD2 region. 2 residues coordinate ATP: Asp423 and Arg438. The (E)-4-coumaroyl-AMP site is built by Lys440 and Lys444. Residues Lys446 and Gly447 each coordinate CoA. Lys529 is an ATP binding site.

Belongs to the ATP-dependent AMP-binding enzyme family. Mg(2+) serves as cofactor.

The enzyme catalyses (E)-4-coumarate + ATP + CoA = (E)-4-coumaroyl-CoA + AMP + diphosphate. It catalyses the reaction (E)-4-coumarate + ATP + H(+) = (E)-4-coumaroyl-AMP + diphosphate. The catalysed reaction is (E)-4-coumaroyl-AMP + CoA = (E)-4-coumaroyl-CoA + AMP + H(+). Its pathway is phytoalexin biosynthesis; 3,4',5-trihydroxystilbene biosynthesis; 3,4',5-trihydroxystilbene from trans-4-coumarate: step 1/2. In terms of biological role, carboxylate--CoA ligase that may use 4-coumarate as substrate. Follows a two-step reaction mechanism, wherein the carboxylate substrate first undergoes adenylation by ATP, followed by a thioesterification in the presence of CoA to yield the final CoA thioester. This chain is 4-coumarate--CoA ligase 2 (4CL2), found in Solanum tuberosum (Potato).